The primary structure comprises 204 residues: Cell wall protein RHD3 (204 aa).

An N-terminal signal peptide occupies residues 1–15 (MKFLAILSLSSSALA). Gly-182 carries GPI-anchor amidated glycine lipidation. Residues 183–204 (AAGQNKLSYGVGMAAVVAGLVM) constitute a propeptide, removed in mature form.

It belongs to the SRP1/TIP1 family. Post-translationally, the GPI-anchor is attached to the protein in the endoplasmic reticulum and serves to target the protein to the cell surface. There, the glucosamine-inositol phospholipid moiety is cleaved off and the GPI-modified mannoprotein is covalently attached via its lipidless GPI glycan remnant to the 1,6-beta-glucan of the outer cell wall layer. O-glycosylated by PMT1.

The protein resides in the secreted. It localises to the cell wall. The protein localises to the membrane. Component of the cell wall involved in virulence. Does not seem to have a major role in maintaining cell wall integrity but plays a role in the relationship between C.albicans and the host. In Candida albicans (strain SC5314 / ATCC MYA-2876) (Yeast), this protein is Cell wall protein RHD3 (RHD3).